Reading from the N-terminus, the 278-residue chain is Dermonecrotic toxin LspiSicTox-betaIE2ii (278 aa).

Residue His-5 is part of the active site. Glu-25 and Asp-27 together coordinate Mg(2+). His-41 (nucleophile) is an active-site residue. 2 disulfide bridges follow: Cys-45-Cys-51 and Cys-47-Cys-190. Position 85 (Asp-85) interacts with Mg(2+).

It belongs to the arthropod phospholipase D family. Class II subfamily. Mg(2+) serves as cofactor. In terms of tissue distribution, expressed by the venom gland.

Its subcellular location is the secreted. The enzyme catalyses an N-(acyl)-sphingosylphosphocholine = an N-(acyl)-sphingosyl-1,3-cyclic phosphate + choline. It catalyses the reaction an N-(acyl)-sphingosylphosphoethanolamine = an N-(acyl)-sphingosyl-1,3-cyclic phosphate + ethanolamine. It carries out the reaction a 1-acyl-sn-glycero-3-phosphocholine = a 1-acyl-sn-glycero-2,3-cyclic phosphate + choline. The catalysed reaction is a 1-acyl-sn-glycero-3-phosphoethanolamine = a 1-acyl-sn-glycero-2,3-cyclic phosphate + ethanolamine. In terms of biological role, dermonecrotic toxins cleave the phosphodiester linkage between the phosphate and headgroup of certain phospholipids (sphingolipid and lysolipid substrates), forming an alcohol (often choline) and a cyclic phosphate. This toxin acts on sphingomyelin (SM). It may also act on ceramide phosphoethanolamine (CPE), lysophosphatidylcholine (LPC) and lysophosphatidylethanolamine (LPE), but not on lysophosphatidylserine (LPS), and lysophosphatidylglycerol (LPG). It acts by transphosphatidylation, releasing exclusively cyclic phosphate products as second products. Induces dermonecrosis, hemolysis, increased vascular permeability, edema, inflammatory response, and platelet aggregation. The chain is Dermonecrotic toxin LspiSicTox-betaIE2ii from Loxosceles spinulosa (Recluse spider).